The sequence spans 562 residues: MFS-type efflux pump elcC (562 aa).

Transmembrane regions (helical) follow at residues 50–70, 80–100, 111–131, 139–159, 184–204, 215–235, 257–277, 288–308, 309–329, 351–371, and 383–403; these read WVFL…GAAP, VVAG…VAEF, GMLG…GGAF, LCFY…FLLV, LYGL…TQWG, IIAL…IEIW, IFSF…PLWF, SGIH…AAGG, MVFG…LAAV, VLYG…IQAA, and VVIF…QNVF. The N-linked (GlcNAc...) asparagine glycan is linked to Asn-448. A helical membrane pass occupies residues 455-475; sequence FYVAVATAGLSMAGSILIPWL. The interval 515-562 is disordered; the sequence is EIASEDSQSSDIEKVPRNNEVSTYDSQTSEVEKSSVGSTNRKVESIRN. The span at 533 to 554 shows a compositional bias: polar residues; sequence NEVSTYDSQTSEVEKSSVGSTN.

This sequence belongs to the major facilitator superfamily. TCR/Tet family.

Its subcellular location is the cell membrane. MFS-type efflux pump; part of the gene cluster that mediates the biosynthesis of elsinochrome C, a perelyenequinone phytotoxin structurally similar to cercosporin. The polypeptide is MFS-type efflux pump elcC (Phaeosphaeria nodorum (strain SN15 / ATCC MYA-4574 / FGSC 10173) (Glume blotch fungus)).